A 953-amino-acid chain; its full sequence is Translation initiation factor IF-2 (953 aa).

Disordered stretches follow at residues 52–247 (KASK…LAEL) and 279–363 (TKLK…TERK). 3 stretches are compositionally biased toward basic and acidic residues: residues 80-89 (TGSEHVEKTQ), 98-111 (FKAE…EQAA), and 140-188 (QGDK…ENHK). Positions 191-207 (RFTNQKKQGRQEPQSKS) are enriched in polar residues. Residues 229-247 (RQSETRFRAQQEAKRLAEL) show a composition bias toward basic and acidic residues. A compositionally biased stretch (polar residues) spans 282-291 (KSSNISAKST). The segment covering 300-317 (ARPEKNRELTHHSQEGQK) has biased composition (basic and acidic residues). Positions 322 to 338 (SWNSQNQVRNQKNSNWN) are enriched in low complexity. A compositionally biased stretch (basic residues) spans 339–348 (KNKKTKKGKN). The region spanning 454–623 (ERAPVVTIMG…LLVAEVEELK (170 aa)) is the tr-type G domain. Positions 463 to 470 (GHVDHGKT) are G1. A GTP-binding site is contributed by 463–470 (GHVDHGKT). The tract at residues 488–492 (GITQH) is G2. The G3 stretch occupies residues 509-512 (DTPG). Residues 509–513 (DTPGH) and 563–566 (NKID) each bind GTP. The tract at residues 563–566 (NKID) is G4. The tract at residues 599–601 (SAK) is G5.

The protein belongs to the TRAFAC class translation factor GTPase superfamily. Classic translation factor GTPase family. IF-2 subfamily.

The protein resides in the cytoplasm. Its function is as follows. One of the essential components for the initiation of protein synthesis. Protects formylmethionyl-tRNA from spontaneous hydrolysis and promotes its binding to the 30S ribosomal subunits. Also involved in the hydrolysis of GTP during the formation of the 70S ribosomal complex. This Streptococcus pyogenes serotype M5 (strain Manfredo) protein is Translation initiation factor IF-2.